Reading from the N-terminus, the 58-residue chain is Small ribosomal subunit protein eS31 (58 aa).

Cys-29, Cys-32, Cys-48, and Cys-51 together coordinate Zn(2+). A C4-type zinc finger spans residues Cys-29–Cys-51.

The protein belongs to the eukaryotic ribosomal protein eS31 family. In terms of assembly, part of the 30S ribosomal subunit. The cofactor is Zn(2+).

This chain is Small ribosomal subunit protein eS31, found in Ignicoccus hospitalis (strain KIN4/I / DSM 18386 / JCM 14125).